The chain runs to 150 residues: 3-hydroxyacyl-[acyl-carrier-protein] dehydratase FabZ (150 aa).

H51 is a catalytic residue.

Belongs to the thioester dehydratase family. FabZ subfamily.

Its subcellular location is the cytoplasm. The catalysed reaction is a (3R)-hydroxyacyl-[ACP] = a (2E)-enoyl-[ACP] + H2O. In terms of biological role, involved in unsaturated fatty acids biosynthesis. Catalyzes the dehydration of short chain beta-hydroxyacyl-ACPs and long chain saturated and unsaturated beta-hydroxyacyl-ACPs. In Rubrobacter xylanophilus (strain DSM 9941 / JCM 11954 / NBRC 16129 / PRD-1), this protein is 3-hydroxyacyl-[acyl-carrier-protein] dehydratase FabZ.